The chain runs to 193 residues: Ion-translocating oxidoreductase complex subunit A (193 aa).

A run of 6 helical transmembrane segments spans residues 5–25 (ILLIISTALINNFVLVKFLGL), 39–59 (IGMGMATTFVLTVASLSAYLV), 65–85 (IPLEAQFLRTLVFILVIAVIV), 102–122 (LLGIYLPLITTNCAVLGVALL), 134–154 (VLYGFGAALGFSLVLVLFAAL), and 171–191 (SIALITAGLMSLAFMGFTGLV).

The protein belongs to the NqrDE/RnfAE family. As to quaternary structure, the complex is composed of six subunits: RnfA, RnfB, RnfC, RnfD, RnfE and RnfG.

Its subcellular location is the cell inner membrane. Part of a membrane-bound complex that couples electron transfer with translocation of ions across the membrane. This chain is Ion-translocating oxidoreductase complex subunit A, found in Actinobacillus pleuropneumoniae serotype 5b (strain L20).